A 121-amino-acid chain; its full sequence is Small ribosomal subunit protein uS12c (121 aa).

Belongs to the universal ribosomal protein uS12 family. In terms of assembly, part of the 30S ribosomal subunit.

The protein localises to the plastid. The protein resides in the chloroplast. Its function is as follows. With S4 and S5 plays an important role in translational accuracy. Located at the interface of the 30S and 50S subunits. The polypeptide is Small ribosomal subunit protein uS12c (rps12) (Bigelowiella natans (Pedinomonas minutissima)).